A 419-amino-acid chain; its full sequence is AT-rich binding protein (419 aa).

The C2H2-type 1 zinc-finger motif lies at 29-52; the sequence is IVCHTCQEELQTQDAFWKHIQDEH. Positions 121–179 are disordered; that stretch reads LHEAQHQQQQQQQQHQQQQQQQQHQQQQQHQHHQHQQQQQHLHQQQQQQQQQQRDAAKE. 2 stretches are compositionally biased toward low complexity: residues 126-149 and 156-173; these read HQQQQQQQQHQQQQQQQQHQQQQQ and QQQQQHLHQQQQQQQQQQ. 2 consecutive C2H2-type zinc fingers follow at residues 352–376 and 382–405; these read YVCDYGTCGIKFKYKSRMELHRVVH and FNCDMCSASFKQSCNLSTHRKKKH.

It is found in the nucleus. May be a transcription factor for genes having (A+T) stretches in their promoter and/or enhancer regions. Binds to AT rich DNA. The protein is AT-rich binding protein of Drosophila grimshawi (Hawaiian fruit fly).